The primary structure comprises 31 residues: Photosystem II reaction center protein T (31 aa).

A helical membrane pass occupies residues 3 to 23 (ALVYTFLLVGTLGIIFFSIFF).

It belongs to the PsbT family. As to quaternary structure, PSII is composed of 1 copy each of membrane proteins PsbA, PsbB, PsbC, PsbD, PsbE, PsbF, PsbH, PsbI, PsbJ, PsbK, PsbL, PsbM, PsbT, PsbY, PsbZ, Psb30/Ycf12, at least 3 peripheral proteins of the oxygen-evolving complex and a large number of cofactors. It forms dimeric complexes.

The protein localises to the plastid. The protein resides in the chloroplast thylakoid membrane. Functionally, found at the monomer-monomer interface of the photosystem II (PS II) dimer, plays a role in assembly and dimerization of PSII. PSII is a light-driven water plastoquinone oxidoreductase, using light energy to abstract electrons from H(2)O, generating a proton gradient subsequently used for ATP formation. In Tupiella akineta (Green alga), this protein is Photosystem II reaction center protein T.